We begin with the raw amino-acid sequence, 423 residues long: MFLECNPRFVSRLTRDTLALIMAGGRGGRLSNLTDWRTKPAVPFGGKFRLIDFPLSNCINSGIRRIEVLTQYKAHSLIQHIQRGWGFLRGEFGEFVELVPAQQRMDKPLWYAGTADAVYQNIDIIKAHNPSYVLVLAGDHVYKMDYGGMIARHAESGAAMTVGCVEVPRKRASAFGVMSVNEERQVLAFNEKPKDPTPMPGNPDRALVSMGIYVFDRDYLFQLLREDAENFDSSRDFGKDVIPNAIANHKVQAYPFSDPVSGQQAYWRDVGTVDAFFQANMELIGEDPELNLYDEEWPIWTYQAQLPPAKFIQGRDGRHGTAINSMVSGGDIIHGAEVRDSLLFSQVVVQPGATVHEAVILPDVRVGEGCRIRKAVIDEGCRIPAGTVIGEDPAEDRRRFFVTPKDVVLVTAEMLGQEVAHVR.

Residues Y111, G176, 191–192 (EK), and S209 each bind alpha-D-glucose 1-phosphate.

Belongs to the bacterial/plant glucose-1-phosphate adenylyltransferase family. In terms of assembly, homotetramer.

It carries out the reaction alpha-D-glucose 1-phosphate + ATP + H(+) = ADP-alpha-D-glucose + diphosphate. It participates in glycan biosynthesis; glycogen biosynthesis. Involved in the biosynthesis of ADP-glucose, a building block required for the elongation reactions to produce glycogen. Catalyzes the reaction between ATP and alpha-D-glucose 1-phosphate (G1P) to produce pyrophosphate and ADP-Glc. In Alkalilimnicola ehrlichii (strain ATCC BAA-1101 / DSM 17681 / MLHE-1), this protein is Glucose-1-phosphate adenylyltransferase 1.